A 193-amino-acid chain; its full sequence is Putative manganese efflux pump MntP (193 aa).

6 helical membrane-spanning segments follow: residues 3-23 (IFAV…VAVV), 41-61 (AAFG…GVSV), 69-89 (DHWI…LSGL), 107-127 (AGRN…AVGL), 130-150 (AILG…CAVI), and 164-184 (LCAL…AIAC).

It belongs to the MntP (TC 9.B.29) family.

It is found in the cell inner membrane. Functionally, probably functions as a manganese efflux pump. The polypeptide is Putative manganese efflux pump MntP (Desulfovibrio desulfuricans (strain ATCC 27774 / DSM 6949 / MB)).